We begin with the raw amino-acid sequence, 343 residues long: Anthranilate phosphoribosyltransferase (343 aa).

Residues glycine 84, glycine 87–aspartate 88, threonine 92, asparagine 94–threonine 97, lysine 112–serine 120, and serine 124 each bind 5-phospho-alpha-D-ribose 1-diphosphate. Glycine 84 is a binding site for anthranilate. A Mg(2+)-binding site is contributed by serine 96. Position 115 (asparagine 115) interacts with anthranilate. Position 170 (arginine 170) interacts with anthranilate. Residues aspartate 229 and glutamate 230 each coordinate Mg(2+).

This sequence belongs to the anthranilate phosphoribosyltransferase family. Homodimer. Requires Mg(2+) as cofactor.

It carries out the reaction N-(5-phospho-beta-D-ribosyl)anthranilate + diphosphate = 5-phospho-alpha-D-ribose 1-diphosphate + anthranilate. The protein operates within amino-acid biosynthesis; L-tryptophan biosynthesis; L-tryptophan from chorismate: step 2/5. Its function is as follows. Catalyzes the transfer of the phosphoribosyl group of 5-phosphorylribose-1-pyrophosphate (PRPP) to anthranilate to yield N-(5'-phosphoribosyl)-anthranilate (PRA). In Burkholderia orbicola (strain AU 1054), this protein is Anthranilate phosphoribosyltransferase.